The following is a 130-amino-acid chain: YopE regulator (130 aa).

Positive regulator of YopE. The sequence is that of YopE regulator (yerA) from Yersinia pestis.